We begin with the raw amino-acid sequence, 899 residues long: Protein translocase subunit SecA (899 aa).

Residues Gln-87, 105-109, and Asp-516 each bind ATP; that span reads GEGKT. Cys-884, Cys-886, Cys-895, and His-896 together coordinate Zn(2+).

This sequence belongs to the SecA family. Monomer and homodimer. Part of the essential Sec protein translocation apparatus which comprises SecA, SecYEG and auxiliary proteins SecDF. Other proteins may also be involved. Zn(2+) serves as cofactor.

The protein localises to the cell inner membrane. The protein resides in the cytoplasm. It carries out the reaction ATP + H2O + cellular proteinSide 1 = ADP + phosphate + cellular proteinSide 2.. Functionally, part of the Sec protein translocase complex. Interacts with the SecYEG preprotein conducting channel. Has a central role in coupling the hydrolysis of ATP to the transfer of proteins into and across the cell membrane, serving as an ATP-driven molecular motor driving the stepwise translocation of polypeptide chains across the membrane. This Borrelia garinii subsp. bavariensis (strain ATCC BAA-2496 / DSM 23469 / PBi) (Borreliella bavariensis) protein is Protein translocase subunit SecA.